A 58-amino-acid polypeptide reads, in one-letter code: Conotoxin Leo-T2 (58 aa).

Residues M1–A22 form the signal peptide. The propeptide occupies Q23 to R47.

The protein belongs to the conotoxin T superfamily. Post-translationally, contains 2 disulfide bonds that can be either 'C1-C3, C2-C4' or 'C1-C4, C2-C3', since these disulfide connectivities have been observed for conotoxins with cysteine framework V (for examples, see AC P0DQQ7 and AC P81755). As to expression, expressed by the venom duct.

The protein resides in the secreted. In Conus leopardus (Leopard cone), this protein is Conotoxin Leo-T2.